We begin with the raw amino-acid sequence, 549 residues long: Glucose-6-phosphate isomerase (549 aa).

Catalysis depends on glutamate 355, which acts as the Proton donor. Active-site residues include histidine 387 and lysine 515.

It belongs to the GPI family.

The protein localises to the cytoplasm. It catalyses the reaction alpha-D-glucose 6-phosphate = beta-D-fructose 6-phosphate. The protein operates within carbohydrate biosynthesis; gluconeogenesis. Its pathway is carbohydrate degradation; glycolysis; D-glyceraldehyde 3-phosphate and glycerone phosphate from D-glucose: step 2/4. Catalyzes the reversible isomerization of glucose-6-phosphate to fructose-6-phosphate. The polypeptide is Glucose-6-phosphate isomerase (Histophilus somni (strain 2336) (Haemophilus somnus)).